We begin with the raw amino-acid sequence, 390 residues long: Precorrin-6Y C(5,15)-methyltransferase [decarboxylating] (390 aa).

The protein belongs to the precorrin methyltransferase family.

The catalysed reaction is precorrin-6B + 2 S-adenosyl-L-methionine = precorrin-8X + 2 S-adenosyl-L-homocysteine + CO2 + 3 H(+). The protein operates within cofactor biosynthesis; adenosylcobalamin biosynthesis; cob(II)yrinate a,c-diamide from precorrin-2 (aerobic route): step 7/10. Catalyzes the methylation of both C-5 and C-15 in precorrin-6Y to form precorrin-8X. This Mycobacterium tuberculosis (strain ATCC 25618 / H37Rv) protein is Precorrin-6Y C(5,15)-methyltransferase [decarboxylating] (cobL).